The primary structure comprises 1501 residues: EF-hand calcium-binding domain-containing protein 6 (1501 aa).

Residues 18–47 (RKFTHSRPHSSPCRVYSRNGSPNKFRSSST) are disordered. The segment covering 35-47 (RNGSPNKFRSSST) has biased composition (polar residues). 7 consecutive EF-hand domains span residues 70–105 (DRGDELQKAFQLLDTGQNLTVSKSELRRIITDFLMP), 172–207 (KNIKTVMKAFELIDVNKTGLVRPQELRRVLETFCMK), 297–332 (KSYEKVEKALSAGDPCKGGYVSFNYLKIVLDTFVYQ), 403–438 (DHSASLKKALLIINTKPDGPITREEFRYILNCMAVK), 439–474 (LSDSEFKELMQMLDPGDTGVVNTSMFIDLIEENCRM), 504–539 (RNLQAFYNMLRSYDLGDTGRIGRNNFKKIMHVFCPF), and 634–669 (QQDPAFKKRFLDFSKEPNGKINVHDFKKVLEDTGMP). Residues 699 to 718 (EDPPMRGPETTPPQPPTPSK) are disordered. EF-hand domains are found at residues 741 to 776 (ESFRDPYSAFFKTDADRDGIINMHDLHRLLLHLLLN), 847 to 882 (NRWSDLSKNFLETDNEGNGILRRRDIKNALYGFDIP), 883 to 918 (LTPREFEKLWARYDTEGKGHITYQEFLQKLGINYSP), 964 to 999 (DRHQDISKAFTKTDQSKTNYISICKMQEVLEECGCS), 1069 to 1104 (SSQLALSTAFSALDKEDTGFVKATEFGQVLKDFCYK), 1176 to 1211 (SHYHAITQEFENFDTMKTNTISREEFRAICNRRVQI), and 1212 to 1247 (LTDEQFDRLWNEMPVNAKGRLKYPDFLSRFSSETAA). 4 residues coordinate Ca(2+): Asp754, Asp756, Asp758, and Asp765. At Thr884 the chain carries Phosphothreonine. The tract at residues 1246-1307 (AATPMATGDS…TTVIPGTPPL (62 aa)) is disordered. Composition is skewed to polar residues over residues 1270 to 1279 (GTRSALSLPT) and 1286 to 1301 (SKSQSHPCTPASTTVI). Residue Ser1290 is modified to Phosphoserine. 2 positions are modified to phosphothreonine: Thr1294 and Thr1304. The segment at 1303–1501 (GTPPLQNCDP…YNDFLRAFLQ (199 aa)) is interaction with PARK7. 3 EF-hand domains span residues 1359-1394 (ISKEECQQLIIKYDLKSNGKFAYCDFIQSCVLLLKA), 1434-1469 (HCWRPMRRTFKSYDEAGTGLLSVADFRTVLRQYSIN), and 1470-1501 (LSEEEFFHILEYYDKTLSSKISYNDFLRAFLQ). The interaction with AR stretch occupies residues 1407–1501 (NAHKMKEAGA…YNDFLRAFLQ (95 aa)).

As to quaternary structure, microtubule inner protein component of sperm flagellar doublet microtubules. Binds PARK7. Part of a ternary complex containing PARK7, EFCAB6/DJBP and AR. In terms of tissue distribution, specifically expressed in the testis.

It is found in the nucleus. It localises to the cytoplasm. The protein resides in the cytoskeleton. The protein localises to the flagellum axoneme. Its function is as follows. Negatively regulates the androgen receptor by recruiting histone deacetylase complex, and protein DJ-1 antagonizes this inhibition by abrogation of this complex. Microtubule inner protein (MIP) part of the dynein-decorated doublet microtubules (DMTs) in cilia axoneme, which is required for motile cilia beating. The protein is EF-hand calcium-binding domain-containing protein 6 of Homo sapiens (Human).